The chain runs to 548 residues: Transcriptional adapter ADA2a (548 aa).

The segment at 1 to 30 (MGRSKLASRPAEEDLNPGKSKRKKISLGPE) is disordered. The ZZ-type zinc finger occupies 48–104 (PGLYCCNYCDKDLSGLVRFKCAVCMDFDLCVECFSVGVELNRHKNSHPYRVMDNLSF). Zn(2+)-binding residues include cysteine 53, cysteine 56, cysteine 68, cysteine 71, cysteine 77, cysteine 80, histidine 90, and histidine 94. Positions 106–158 (LVTSDWNADEEILLLEAIATYGFGNWKEVADHVGSKTTTECIKHFNSAYMQSP) constitute an SANT domain. The residue at position 257 (lysine 257) is an N6-acetyllysine; by GCN5. Residues 365–386 (QSKEEHKELIKKVIEEHQILRR) are a coiled coil. The SWIRM domain maps to 461–548 (PRIYSGLDTW…LVHKGIGDST (88 aa)).

Interacts in vitro with the HAT domain of GCN5 and with the DNA-binding domain of the transcriptional activator DREB1B/CBF1. Post-translationally, acetylated in vitro by GCN5, but acetylation is not essential for biological activity. As to expression, expressed in roots and leaves.

It is found in the nucleus. Functionally, required for the function of some acidic activation domains, which activate transcription from a distant site. The exact mechanism of action is not yet known. ADA2 stimulates the acetyltransferase activity of GCN5 on free histones or nucleosomes, probably by opening up the promoter region. This chain is Transcriptional adapter ADA2a (ADA2A), found in Arabidopsis thaliana (Mouse-ear cress).